We begin with the raw amino-acid sequence, 309 residues long: tRNA dimethylallyltransferase (309 aa).

9–16 lines the ATP pocket; the sequence is GPTAVGKT. A substrate-binding site is contributed by 11–16; the sequence is TAVGKT. Residues 34-37 are interaction with substrate tRNA; sequence DSMQ.

It belongs to the IPP transferase family. In terms of assembly, monomer. The cofactor is Mg(2+).

The catalysed reaction is adenosine(37) in tRNA + dimethylallyl diphosphate = N(6)-dimethylallyladenosine(37) in tRNA + diphosphate. Functionally, catalyzes the transfer of a dimethylallyl group onto the adenine at position 37 in tRNAs that read codons beginning with uridine, leading to the formation of N6-(dimethylallyl)adenosine (i(6)A). In Enterococcus faecalis (strain ATCC 700802 / V583), this protein is tRNA dimethylallyltransferase.